We begin with the raw amino-acid sequence, 278 residues long: Putative phosphoenolpyruvate synthase regulatory protein (278 aa).

158–165 (GVSRSGKT) is a binding site for ADP.

This sequence belongs to the pyruvate, phosphate/water dikinase regulatory protein family. PSRP subfamily.

The enzyme catalyses [pyruvate, water dikinase] + ADP = [pyruvate, water dikinase]-phosphate + AMP + H(+). It carries out the reaction [pyruvate, water dikinase]-phosphate + phosphate + H(+) = [pyruvate, water dikinase] + diphosphate. Bifunctional serine/threonine kinase and phosphorylase involved in the regulation of the phosphoenolpyruvate synthase (PEPS) by catalyzing its phosphorylation/dephosphorylation. The polypeptide is Putative phosphoenolpyruvate synthase regulatory protein (Acinetobacter baylyi (strain ATCC 33305 / BD413 / ADP1)).